The primary structure comprises 337 residues: Tetraacyldisaccharide 4'-kinase (337 aa).

51-58 contacts ATP; sequence HVGGAGKT.

This sequence belongs to the LpxK family.

The catalysed reaction is a lipid A disaccharide + ATP = a lipid IVA + ADP + H(+). The protein operates within glycolipid biosynthesis; lipid IV(A) biosynthesis; lipid IV(A) from (3R)-3-hydroxytetradecanoyl-[acyl-carrier-protein] and UDP-N-acetyl-alpha-D-glucosamine: step 6/6. Its function is as follows. Transfers the gamma-phosphate of ATP to the 4'-position of a tetraacyldisaccharide 1-phosphate intermediate (termed DS-1-P) to form tetraacyldisaccharide 1,4'-bis-phosphate (lipid IVA). The polypeptide is Tetraacyldisaccharide 4'-kinase (Afipia carboxidovorans (strain ATCC 49405 / DSM 1227 / KCTC 32145 / OM5) (Oligotropha carboxidovorans)).